The sequence spans 265 residues: Neutrophil elastase (265 aa).

A signal peptide spans 1 to 26; the sequence is MALGRLSSRTLAAMLLALFLGGPALA. Positions 29–247 constitute a Peptidase S1 domain; it reads IVGGRPARPH…FADWINSIIR (219 aa). Residues Cys54 and Cys70 are joined by a disulfide bond. Active-site charge relay system residues include His69 and Asp116. N-linked (GlcNAc...) asparagine glycosylation is found at Asn123 and Asn172. 3 cysteine pairs are disulfide-bonded: Cys150-Cys208, Cys180-Cys187, and Cys198-Cys223. Ser202 (charge relay system) is an active-site residue.

It belongs to the peptidase S1 family. Elastase subfamily. In terms of assembly, interacts with NOTCH2NL.

It catalyses the reaction Hydrolysis of proteins, including elastin. Preferential cleavage: Val-|-Xaa &gt; Ala-|-Xaa.. In terms of biological role, serine protease that modifies the functions of natural killer cells, monocytes and granulocytes. Inhibits C5a-dependent neutrophil enzyme release and chemotaxis. Promotes blood coagulation. Through the activation of the platelet fibrinogen receptor integrin alpha-IIb/beta-3, potentiates platelet aggregation induced by a threshold concentration of cathepsin G (CTSG). Cleaves and thus inactivates tissue factor pathway inhibitor (TFPI). Capable of killing E.coli; probably digests outer membrane protein A (ompA) in E.coli. In Mus musculus (Mouse), this protein is Neutrophil elastase (Elane).